The sequence spans 288 residues: 4-diphosphocytidyl-2-C-methyl-D-erythritol kinase (288 aa).

Lys-10 is a catalytic residue. Position 99–109 (99–109 (PMGGGLGGGSS)) interacts with ATP. Residue Asp-141 is part of the active site.

The protein belongs to the GHMP kinase family. IspE subfamily. As to quaternary structure, homodimer.

The enzyme catalyses 4-CDP-2-C-methyl-D-erythritol + ATP = 4-CDP-2-C-methyl-D-erythritol 2-phosphate + ADP + H(+). It participates in isoprenoid biosynthesis; isopentenyl diphosphate biosynthesis via DXP pathway; isopentenyl diphosphate from 1-deoxy-D-xylulose 5-phosphate: step 3/6. Its function is as follows. Catalyzes the phosphorylation of the position 2 hydroxy group of 4-diphosphocytidyl-2C-methyl-D-erythritol. This chain is 4-diphosphocytidyl-2-C-methyl-D-erythritol kinase, found in Serratia proteamaculans (strain 568).